A 298-amino-acid chain; its full sequence is Porphobilinogen deaminase (298 aa).

Cysteine 242 is modified (S-(dipyrrolylmethanemethyl)cysteine).

It belongs to the HMBS family. In terms of assembly, monomer. Dipyrromethane is required as a cofactor.

It catalyses the reaction 4 porphobilinogen + H2O = hydroxymethylbilane + 4 NH4(+). Its pathway is porphyrin-containing compound metabolism; protoporphyrin-IX biosynthesis; coproporphyrinogen-III from 5-aminolevulinate: step 2/4. In terms of biological role, tetrapolymerization of the monopyrrole PBG into the hydroxymethylbilane pre-uroporphyrinogen in several discrete steps. This is Porphobilinogen deaminase from Fusobacterium nucleatum subsp. nucleatum (strain ATCC 25586 / DSM 15643 / BCRC 10681 / CIP 101130 / JCM 8532 / KCTC 2640 / LMG 13131 / VPI 4355).